The primary structure comprises 930 residues: MHVKAETVLALLTPGLPSVVGQHVVDLSGDGWTLSSTALDRTVPGHLPSQVHLDLFEAGVINITASMILTFVGLLMPIGRIPATRLKACDLENFESTWLVFDGLDTFTTITFCDQHVGSTDNQFRQYHFDVSQILKECKQDPVIRINFGSAPSIANAIAKSPDAEEWPPGVQITNEYPNRWYIRKEQSDFGWDWGPAFAPVGPWKPSYIVQNNHAELYVLNTDLDFYRQGQINYLPPDQSQPWIVNASIDILGPVPWKPSMSIEIKDAATGSVLSSGLLQNVTVSGNSITGTTTIDGDAPKLWWPSGMGEQNLYNVTVTVQNDKKKSLAKVTKRTGFRTIFLNQRNITDDQLAQGIAPGANWHFEINGHAFYAKGSNIIPPDAFWPRVTQARMARLFDAVTAGNQNMLRVWASGAYLHDFIYDLADEKGILLWSEFQFSDALYPVNDAFLENVAAEVVYNVRRVNHHPSLALWAGGNEIESLMLPMVKRADPTGYSKYVGEYEKLYISLILPLVYENTRSITYSPSSTTEGYLYVNLSAPVPMAERYSNTTPGSYYGDTDYYNYDTSVSFDYNHYPVGRFANEFGFHSMPSLQTWQQAVDPEDLHFNSSVVMLRNHHYTAGGLFTDNFKNSSKGMGEMTMGVEAYYPIPSKSDSVANFSAWCHATQLFQADMYKSQIQFYRRGSGMPERQLGSLYWQLEDIWQAPTWAGIEYDGRWKVLHYVARDIYQPIIVSPFWNYTTGRLEVYVTSDLWEPAQGTVNLTWVDLSGKTIANNAGTPETVNFTVGALNTTNIYTTNISELSLPDLKDSILILSLSGEGRLPNTSSKKAFVHQNHFTPVFPKDLSLKDPKLEISYSPESRKFTVQATGGVSLYTWLDYPAGAVGYFEENAFVLLPGVQKEVSFAAQEGNVTDDWVRRVTVQSLWDQKVRD.

The N-terminal stretch at 1–21 (MHVKAETVLALLTPGLPSVVG) is a signal peptide. N-linked (GlcNAc...) asparagine glycosylation is found at N62, N246, N281, N315, and N346. Residue E478 is the Proton donor of the active site. N-linked (GlcNAc...) asparagine glycosylation is found at N536, N607, N630, N657, N737, N760, N782, N789, N797, N823, and N909.

The protein belongs to the glycosyl hydrolase 2 family. Beta-mannosidase A subfamily. Homodimer.

The protein resides in the secreted. The enzyme catalyses Hydrolysis of terminal, non-reducing beta-D-mannose residues in beta-D-mannosides.. Its pathway is glycan metabolism; N-glycan degradation. In terms of biological role, exoglycosidase that cleaves the single beta-linked mannose residue from the non-reducing end of beta-mannosidic oligosaccharides of various complexity and length. Involved in the degradation of polymeric mannan and galactomannan. The chain is Beta-mannosidase A (mndA) from Neosartorya fischeri (strain ATCC 1020 / DSM 3700 / CBS 544.65 / FGSC A1164 / JCM 1740 / NRRL 181 / WB 181) (Aspergillus fischerianus).